The primary structure comprises 832 residues: Sodium/hydrogen exchanger 3 (832 aa).

Residues 1–29 form the signal peptide; sequence MGRNRSGCVARCVSLTALVLLLCCPVVRS. The Extracellular segment spans residues 30 to 66; the sequence is SEAETDPDSHTEHGDSHGGSREGNDTGFQIVTFRWEH. Residues 31 to 51 are disordered; sequence EAETDPDSHTEHGDSHGGSRE. A compositionally biased stretch (basic and acidic residues) spans 36-51; it reads PDSHTEHGDSHGGSRE. A helical membrane pass occupies residues 67–89; that stretch reads VQTPYVIALWILVASLGKIVFHL. The Cytoplasmic segment spans residues 90 to 97; the sequence is SEKVTSVV. Residues 98–117 traverse the membrane as a helical segment; it reads PESALLIVLGLILGGIVWAA. Residues 118–126 are Extracellular-facing; that stretch reads DHSASFTLT. The chain crosses the membrane as a helical span at residues 127-144; sequence PTVFFFYLLPPIVLDAGY. The Cytoplasmic segment spans residues 145–147; it reads FMP. A helical transmembrane segment spans residues 148-183; sequence NRHFFGNLGTILTYAVIGTVWNAATTGLSLYGVFLL. The a 1,2-diacyl-sn-glycero-3-phospho-(1D-myo-inositol) site is built by Gly153, Gly156, and Thr157. The Extracellular segment spans residues 184–196; it reads GLMGDLKAGLLEF. The helical transmembrane segment at 197-218 threads the bilayer; that stretch reads LLFGSLIAAVDPVAVLAVFEEV. Residues 219 to 220 lie on the Cytoplasmic side of the membrane; sequence HV. The chain crosses the membrane as a helical span at residues 221 to 252; the sequence is NEVLFIIVFGESLLNDAVTVVLYNVFNSFVEV. At 253-259 the chain is on the extracellular side; it reads GAGNVQG. A helical membrane pass occupies residues 260 to 294; sequence LDYFKGIVSFFVVSLGGTAVGIIFAFILSLVTRFT. Residues 295-296 lie on the Cytoplasmic side of the membrane; sequence KH. The helical transmembrane segment at 297 to 319 threads the bilayer; the sequence is VRVIEPGFVFVISYLSYLTADML. The Extracellular portion of the chain corresponds to 320–321; sequence SL. The chain crosses the membrane as a helical span at residues 322–338; sequence SAILAITFCGICCQKYV. Over 339–345 the chain is Cytoplasmic; the sequence is KANLCEQ. The chain crosses the membrane as a helical span at residues 346 to 374; that stretch reads SITTVRYAMKMLASGAETIIFMFLGISAV. The Extracellular segment spans residues 375 to 382; sequence NPTIWTWN. The chain crosses the membrane as a helical span at residues 383–404; the sequence is TAFILLTLVFISVYRVIGVVIQ. At 405 to 417 the chain is on the cytoplasmic side; that stretch reads TWILNHYRVVQLE. The chain crosses the membrane as a helical span at residues 418–441; it reads IIDQVVMSYGGLRGAVAFALVVLL. At 442–448 the chain is on the extracellular side; that stretch reads DSNYVGE. Residues 449–482 form a helical membrane-spanning segment; that stretch reads RRLFVSTTIIVVYFTVIFQGLTIKPLVKWLKVKR. Topologically, residues 483 to 832 are cytoplasmic; the sequence is SQHKEPLLNE…PLSFLPESSM (350 aa). 3 residues coordinate a 1,2-diacyl-sn-glycero-3-phospho-(1D-myo-inositol): Gln512, Ile513, and His515. The disordered stretch occupies residues 740–760; sequence TPASNDADETGTGIDNPSFSN.

Belongs to the monovalent cation:proton antiporter 1 (CPA1) transporter (TC 2.A.36) family. As to quaternary structure, homodimer. Detected in early distal renal tubules in the kidney bundle zone, in proximal and late distal tubules in the kidney sinus zone, in absorptive epithelial cells of the intestine and in rectal epithelium (at protein level). Isoform 1 is expressed strongly in the gills, at intermediate levels in the kidney, spleen, rectum, spiral intestine and skin, and weakly in the brain, blood and rectal gland. Isoform 2 is expressed strongly in the kidney, rectum and spiral intestine, and weakly in muscles and the rectal gland.

It is found in the apical cell membrane. The protein resides in the cell membrane. Its subcellular location is the recycling endosome membrane. The protein localises to the early endosome membrane. The catalysed reaction is Na(+)(in) + H(+)(out) = Na(+)(out) + H(+)(in). Its activity is regulated as follows. Seems to switch between active and inactive modes in response to various stimuli. Activated directly or indirectly by membrane phosphatidylinositol (PIs). Regulated by a variety of auxiliary proteins, which facilitate the maturation, cell surface expression and function of the transporter. Inhibited specifically by the drug tenapanor. In terms of biological role, plasma membrane Na(+)/H(+) antiporter. Exchanges intracellular H(+) ions for extracellular Na(+) in 1:1 stoichiometry, playing a key role in salt and fluid absorption and pH homeostasis. Major apical Na(+)/H(+) exchanger in kidney and intestine playing an important role in renal and intestine Na(+) absorption and blood pressure regulation. The polypeptide is Sodium/hydrogen exchanger 3 (Triakis scyllium (Banded houndshark)).